We begin with the raw amino-acid sequence, 462 residues long: Elongation factor 1-alpha 1 (462 aa).

Position 2 is a n,N,N-trimethylglycine (G2). Residues 5–242 (KTHINIVVIG…DCILPPTRPT (238 aa)) form the tr-type G domain. The G1 stretch occupies residues 14–21 (GHVDSGKS). 14-21 (GHVDSGKS) contributes to the GTP binding site. K36 is subject to N6,N6,N6-trimethyllysine; alternate. The residue at position 36 (K36) is an N6,N6-dimethyllysine; alternate. Position 36 is an N6-methyllysine; alternate (K36). K55 carries the post-translational modification N6,N6-dimethyllysine. The segment at 70 to 74 (GITID) is G2. N6,N6,N6-trimethyllysine; by EEF1AKMT1 is present on K79. The tract at residues 91–94 (DAPG) is G3. 153–156 (NKMD) contacts GTP. Residues 153 to 156 (NKMD) are G4. The residue at position 165 (K165) is an N6,N6,N6-trimethyllysine; alternate; by EEF1AKMT3. The residue at position 165 (K165) is an N6,N6-dimethyllysine; alternate; by EEF1AKMT3. An N6-acetyllysine; alternate modification is found at K165. The residue at position 165 (K165) is an N6-methyllysine; alternate; by EEF1AKMT3. K172 is subject to N6-acetyllysine. 194–196 (SGW) serves as a coordination point for GTP. Residues 194–196 (SGW) form a G5 region. Residue K273 is modified to N6-acetyllysine. S300 carries the post-translational modification Phosphoserine; by TGFBR1. E301 carries the 5-glutamyl glycerylphosphorylethanolamine modification. At K318 the chain carries N6,N6,N6-trimethyllysine; by EEF1AKMT2. E374 bears the 5-glutamyl glycerylphosphorylethanolamine mark. Residue K385 forms a Glycyl lysine isopeptide (Lys-Gly) (interchain with G-Cter in ubiquitin) linkage. An N6-acetyllysine; alternate modification is found at K392. Residue K392 is modified to N6-succinyllysine; alternate. The residue at position 432 (T432) is a Phosphothreonine; by PASK. K439 is modified (N6-acetyllysine).

Belongs to the TRAFAC class translation factor GTPase superfamily. Classic translation factor GTPase family. EF-Tu/EF-1A subfamily. In terms of assembly, found in a nuclear export complex with XPO5, EEF1A1, Ran and aminoacylated tRNA. Interacts with PARP1 and TXK. Interacts with KARS1. May interact with ERGIC2. Interacts with IFIT1 (via TPR repeats 4-7). Interacts with DLC1, facilitating distribution to the membrane periphery and ruffles upon growth factor stimulation. Interacts with ZPR1; the interaction occurs in a epidermal growth factor (EGF)-dependent manner. Interacts with PPP1R16B. Interacts with SPHK1 and SPHK2; both interactions increase SPHK1 and SPHK2 kinase activity. Interacts with guanyl-nucleotide exchange factor EEF1B2. Interacts (via middle-region) with HTATIP2 (via N-terminus); the interaction is direct and competes with EEF1A1 binding to guanyl-nucleotide exchange factor EEF1B2, thereby inhibiting GDP for GTP exchange and reactivation of EEF1A1. Interacts with tRNA. Post-translationally, ISGylated. Phosphorylated by TXK. Phosphorylation by PASK increases translation efficiency. Phosphorylated by ROCK2. Phosphorylation by TGFBR1 inhibits translation elongation. In terms of processing, trimethylated at Lys-79 by EEF1AKMT1. Methylated at Lys-165 by EEF1AKMT3, methylation by EEF1AKMT3 is dynamic as well as inducible by stress conditions, such as ER-stress, and plays a regulatory role on mRNA translation. Trimethylated at Lys-318 by EEF1AKMT2. Mono-, di-, and trimethylated at Lys-36 by EEF1AKMT4; trimethylated form is predominant. Methylation by EEF1AKMT4 contributes to the fine-tuning of translation rates for a subset of tRNAs. Trimethylated at Gly-2 by METTL13. Mono- and dimethylated at Lys-55 by METTL13; dimethylated form is predominant. Post-translationally, ubiquitinated at Lys-385 by RNF14 in response to ribosome collisions (ribosome stalling), leading to its degradation by the proteasome and rescue of stalled ribosomes.

Its subcellular location is the cytoplasm. It localises to the nucleus. The protein localises to the nucleolus. It is found in the cell membrane. The enzyme catalyses GTP + H2O = GDP + phosphate + H(+). Its function is as follows. Translation elongation factor that catalyzes the GTP-dependent binding of aminoacyl-tRNA (aa-tRNA) to the A-site of ribosomes during the elongation phase of protein synthesis. Base pairing between the mRNA codon and the aa-tRNA anticodon promotes GTP hydrolysis, releasing the aa-tRNA from EEF1A1 and allowing its accommodation into the ribosome. The growing protein chain is subsequently transferred from the P-site peptidyl tRNA to the A-site aa-tRNA, extending it by one amino acid through ribosome-catalyzed peptide bond formation. Also plays a role in the positive regulation of IFNG transcription in T-helper 1 cells as part of an IFNG promoter-binding complex with TXK and PARP1. Also plays a role in cytoskeleton organization by promoting actin bundling. The protein is Elongation factor 1-alpha 1 (EEF1A1) of Cricetulus griseus (Chinese hamster).